A 369-amino-acid polypeptide reads, in one-letter code: Anhydro-N-acetylmuramic acid kinase (369 aa).

12-19 (GTSLDGVD) contacts ATP.

Belongs to the anhydro-N-acetylmuramic acid kinase family.

It carries out the reaction 1,6-anhydro-N-acetyl-beta-muramate + ATP + H2O = N-acetyl-D-muramate 6-phosphate + ADP + H(+). The protein operates within amino-sugar metabolism; 1,6-anhydro-N-acetylmuramate degradation. Its pathway is cell wall biogenesis; peptidoglycan recycling. Its function is as follows. Catalyzes the specific phosphorylation of 1,6-anhydro-N-acetylmuramic acid (anhMurNAc) with the simultaneous cleavage of the 1,6-anhydro ring, generating MurNAc-6-P. Is required for the utilization of anhMurNAc either imported from the medium or derived from its own cell wall murein, and thus plays a role in cell wall recycling. This chain is Anhydro-N-acetylmuramic acid kinase, found in Shigella boydii serotype 18 (strain CDC 3083-94 / BS512).